The primary structure comprises 456 residues: MGKTLFDKVWNKHVLTGKEGDPQLLYIDLHLIHEVTSPQAFEGLRLQNRQLRRPDLTYATLDHNVPTVDIFNIKDEIANKQITTLQKNAKAFGVHIFDMGSDEQGIVHMVGPETGLTQPGKTIVCGDSHTATHGAFGAIAFGIGTSEVEHVFATQSLWQTKPKNLKIEVNGKLPTGVYAKDIILHLINQHGVDFGTGYALEFSGETIRSLSMEARMTICNMAIEAGAKYGMMAPDETTFEYVKGRPYATNYKYDIDAWRELYTDEDAEFDRVITLDVTDLEPQVTWGTNPEMGVSFNTPFPEIQNVNDERAYNYMGLQPGQKAEDIDLGYVFLGSCTNARLSDLVEASHVVKGNKVHPNITAIVVPGSRTVKIEAEKLGLDKIFKDAGFDWREPGCSMCLGMNPDQVPNGVHCASTSNRNFEGRQGKGARTHLVSPAMAAAAAINGKFVDVRKVVV.

Cys-336, Cys-396, and Cys-399 together coordinate [4Fe-4S] cluster.

Belongs to the aconitase/IPM isomerase family. LeuC type 1 subfamily. In terms of assembly, heterodimer of LeuC and LeuD. It depends on [4Fe-4S] cluster as a cofactor.

The enzyme catalyses (2R,3S)-3-isopropylmalate = (2S)-2-isopropylmalate. It functions in the pathway amino-acid biosynthesis; L-leucine biosynthesis; L-leucine from 3-methyl-2-oxobutanoate: step 2/4. Catalyzes the isomerization between 2-isopropylmalate and 3-isopropylmalate, via the formation of 2-isopropylmaleate. The polypeptide is 3-isopropylmalate dehydratase large subunit (Staphylococcus saprophyticus subsp. saprophyticus (strain ATCC 15305 / DSM 20229 / NCIMB 8711 / NCTC 7292 / S-41)).